The chain runs to 115 residues: U3-lycotoxin-Ls1i (115 aa).

Residues 1–20 (MKFVLLFGVFLVTLFSYSSA) form the signal peptide. Residues 21–44 (EMLDDFDQADEDELLSLIEKEEAR) constitute a propeptide that is removed on maturation. 4 disulfides stabilise this stretch: Cys-48-Cys-63, Cys-55-Cys-72, Cys-62-Cys-87, and Cys-74-Cys-85.

It belongs to the neurotoxin 19 (CSTX) family. 01 subfamily. Expressed by the venom gland.

The protein resides in the secreted. The protein is U3-lycotoxin-Ls1i of Lycosa singoriensis (Wolf spider).